The sequence spans 361 residues: uncharacterized protein (361 aa).

WD repeat units lie at residues 57 to 96 (RHKK…VSSK), 103 to 142 (KEIS…GIIH), 146 to 184 (DHID…KPIL), 187 to 229 (EQDE…DHTD), 237 to 275 (SHDF…YERI), and 280 to 318 (SSRS…GDES). Residues 311 to 361 (DQKEGDESSSSDNLDSDEDSSSDSEFSSPKKKKKVGNQGKKPLGTDFFDGL) form a disordered region.

It is found in the nucleus. The protein resides in the nucleolus. This is an uncharacterized protein from Schizosaccharomyces pombe (strain 972 / ATCC 24843) (Fission yeast).